We begin with the raw amino-acid sequence, 92 residues long: MGRSATIAMVPKRRDAMNRHSGPILSSGFIASSSNSCPANSLRMPSALAAETLSFDDRAVRRSTHHPGGGYPQKHAINLQSGLCPAYANASR.

This is an uncharacterized protein from Mycobacterium tuberculosis (strain CDC 1551 / Oshkosh).